Reading from the N-terminus, the 108-residue chain is Phosphoribosyl-ATP pyrophosphatase (108 aa).

It belongs to the PRA-PH family.

It is found in the cytoplasm. The catalysed reaction is 1-(5-phospho-beta-D-ribosyl)-ATP + H2O = 1-(5-phospho-beta-D-ribosyl)-5'-AMP + diphosphate + H(+). It participates in amino-acid biosynthesis; L-histidine biosynthesis; L-histidine from 5-phospho-alpha-D-ribose 1-diphosphate: step 2/9. This Thiobacillus denitrificans (strain ATCC 25259 / T1) protein is Phosphoribosyl-ATP pyrophosphatase.